The primary structure comprises 92 residues: Small ribosomal subunit protein uS19c (92 aa).

Belongs to the universal ribosomal protein uS19 family.

The protein localises to the plastid. Its subcellular location is the chloroplast. Its function is as follows. Protein S19 forms a complex with S13 that binds strongly to the 16S ribosomal RNA. The sequence is that of Small ribosomal subunit protein uS19c from Morus indica (Mulberry).